The primary structure comprises 359 residues: Mitochondrial glutathione transporter SLC25A39 (359 aa).

Residues 1-14 (MADQDPAGISPLQQ) lie on the Mitochondrial intermembrane side of the membrane. Solcar repeat units lie at residues 9–151 (ISPL…LKAF), 159–243 (SDLY…VKSW), and 253–347 (TSVG…GKSF). Residues 15 to 35 (MVASGTGAVVTSLFMTPLDVV) traverse the membrane as a helical segment. The Mitochondrial matrix segment spans residues 36 to 121 (KVRLQSQRPS…VKIVRHEGTR (86 aa)). 4 residues coordinate [2Fe-2S] cluster: cysteine 74, cysteine 78, cysteine 88, and cysteine 94. The helical transmembrane segment at 122–142 (TLWSGLPATLVMTVPATAIYF) threads the bilayer. Residues 143-160 (TAYDQLKAFLCGRALTSD) are Mitochondrial intermembrane-facing. Residues 161–181 (LYAPMVAGALARLGTVTVISP) form a helical membrane-spanning segment. Over 182-214 (LELMRTKLQAQHVSYRELGACVRTAVAQGGWRS) the chain is Mitochondrial matrix. Residues 215 to 235 (LWLGWGPTALRDVPFSALYWF) form a helical membrane-spanning segment. Topologically, residues 236–258 (NYELVKSWLNGFRPKDQTSVGMS) are mitochondrial intermembrane. The helical transmembrane segment at 259–279 (FVAGGISGTVAAVLTLPFDVV) threads the bilayer. The Mitochondrial matrix segment spans residues 280–317 (KTQRQVALGAMEAVRVNPLHVDSTWLLLRRIRAESGTK). A helical membrane pass occupies residues 318–338 (GLFAGFLPRIIKAAPSCAIMI). At 339–359 (STYEFGKSFFQRLNQDRLLGG) the chain is on the mitochondrial intermembrane side.

The protein belongs to the mitochondrial carrier (TC 2.A.29) family. Post-translationally, cleaved and degraded by AFG3L2; degradation by AFG3L2 is regulated by the ability of SLC25A39 to bind iron-sulfur. In absence of mitochondrial glutathione, SLC25A39 binds iron-sulfur, preventing cleavage and degradation by AFG3L2. The presence of mitochondrial glutathione prevents iron-sulfur-binding to SLC25A39, promoting cleavage and degradation by AFG3L2. In terms of tissue distribution, expressed in many tissues. Abundant in testis and kidney.

Its subcellular location is the mitochondrion inner membrane. The enzyme catalyses glutathione(in) = glutathione(out). With respect to regulation, the activity of SLC25A39 is regulated by levels of mitochondrial glutathione via its ability to bind [2Fe-2S] iron-sulfur cluster. Upon physiological levels of mitochondrial glutathione, glutathione prevents iron-sulfur-binding to SLC25A39 promoting cleavage and degradation by AFG3L2. Upon depletion of mitochondrial glutathione, SLC25A39 binds iron-sulfur, preventing cleavage and degradation by AFG3L2. Mitochondrial transporter required for glutathione import into mitochondria. Glutathione, which plays key roles in oxidative metabolism, is produced exclusively in the cytosol and is imported in many organelles. Mitochondrial glutathione is required for the activity and stability of proteins containing iron-sulfur clusters, as well as erythropoiesis. The chain is Mitochondrial glutathione transporter SLC25A39 from Homo sapiens (Human).